The chain runs to 166 residues: Calmodulin-like protein 5 (166 aa).

EF-hand domains lie at glutamate 11 to threonine 46, proline 47 to arginine 82, alanine 96 to lysine 131, and leucine 132 to glutamine 166. 14 residues coordinate Ca(2+): aspartate 24, aspartate 26, aspartate 28, cysteine 30, glutamate 35, aspartate 60, aspartate 62, asparagine 64, threonine 66, glutamate 71, aspartate 109, aspartate 111, aspartate 113, and glutamate 120. An N6,N6,N6-trimethyllysine modification is found at lysine 131. Residues aspartate 145, aspartate 147, aspartate 149, glutamine 151, and glutamate 156 each coordinate Ca(2+).

The protein belongs to the calmodulin family.

In terms of biological role, potential calcium sensor. The chain is Calmodulin-like protein 5 (CML5) from Oryza sativa subsp. japonica (Rice).